The following is a 136-amino-acid chain: uncharacterized protein (136 aa).

This is an uncharacterized protein from Pseudomonas amygdali pv. tabaci (Pseudomonas syringae pv. tabaci).